The primary structure comprises 472 residues: ATP synthase subunit beta (472 aa).

155–162 (GGAGVGKT) is a binding site for ATP.

Belongs to the ATPase alpha/beta chains family. In terms of assembly, F-type ATPases have 2 components, CF(1) - the catalytic core - and CF(0) - the membrane proton channel. CF(1) has five subunits: alpha(3), beta(3), gamma(1), delta(1), epsilon(1). CF(0) has three main subunits: a(1), b(2) and c(9-12). The alpha and beta chains form an alternating ring which encloses part of the gamma chain. CF(1) is attached to CF(0) by a central stalk formed by the gamma and epsilon chains, while a peripheral stalk is formed by the delta and b chains.

It localises to the cell membrane. It catalyses the reaction ATP + H2O + 4 H(+)(in) = ADP + phosphate + 5 H(+)(out). Its function is as follows. Produces ATP from ADP in the presence of a proton gradient across the membrane. The catalytic sites are hosted primarily by the beta subunits. The sequence is that of ATP synthase subunit beta from Fervidobacterium islandicum.